Reading from the N-terminus, the 187-residue chain is Ribosome-recycling factor (187 aa).

It belongs to the RRF family.

Its subcellular location is the cytoplasm. Responsible for the release of ribosomes from messenger RNA at the termination of protein biosynthesis. May increase the efficiency of translation by recycling ribosomes from one round of translation to another. This is Ribosome-recycling factor from Anaeromyxobacter sp. (strain Fw109-5).